A 206-amino-acid polypeptide reads, in one-letter code: MDNKSNGKLIALAIGGAVLMGTLFFLVSFLTGYSPAPNHSAILTPLRSFMGWFLLIFCASLIIMGLGKMSGAISDKWFLSFPLSIFVIVMVMFFSLRFYWEKGRTTTVDGKYIRSVEQLNDFLNKPAATSDLPPVPADFDFAAAEKLTDAKCNKCHTLGSVADLFRTKYKKTGQVKLIVKRMQGFPGANISDDEVIEIGTWLQEKF.

The next 3 membrane-spanning stretches (helical) occupy residues 10–30 (IALA…VSFL), 49–69 (FMGW…LGKM), and 76–96 (KWFL…FFSL). Residues Cys152, Cys155, His156, and Met182 each contribute to the heme site.

As to quaternary structure, component of the photosynthetic reaction center. The reaction center interacts with the Fenna-Matthews-Olson (FMO, fmoA) complex. In terms of processing, binds 1 heme group per subunit.

The protein localises to the cell inner membrane. In terms of biological role, monoheme cytochrome which is the immediate electron donor to P840 of the photosynthetic reaction center complex. The chain is Photosynthetic reaction center cytochrome c-551 (pscC) from Chlorobaculum parvum (strain DSM 263 / NCIMB 8327) (Chlorobium vibrioforme subsp. thiosulfatophilum).